Reading from the N-terminus, the 59-residue chain is Putative zinc finger protein ORF59a (59 aa).

The C2H2-type; degenerate zinc-finger motif lies at 11–33 (YQCLRCGLTFRTKKQLIRHLVNT).

This Acidianus hospitalis (AFV-1) protein is Putative zinc finger protein ORF59a.